Here is a 488-residue protein sequence, read N- to C-terminus: SAGA complex subunit HFI1 (488 aa).

2 disordered regions span residues 1 to 58 (MSAI…QGPN) and 352 to 383 (QLDDDKNEDECADEAKSINNGNNSSKDDIGDI). Residues 37-58 (AVSNHTEPNNGNNETAEPQGPN) show a composition bias toward polar residues.

Component of the 1.8 MDa SAGA (Spt-Ada-Gcn5 acetyltransferase) complex, which is composed of 19 subunits TRA1, SPT7, TAF5, NGG1/ADA3, SGF73, SPT20/ADA5, SPT8, TAF12, TAF6, HFI1/ADA1, UBP8, GCN5, ADA2, SPT3, SGF29, TAF10, TAF9, SGF11 and SUS1. The SAGA complex is composed of 4 modules, namely the HAT (histone acetyltransferase) module (GCN5, ADA2, NGG1/ADA3 and SGF29), the DUB (deubiquitinating) module (UBP8, SGF11, SGF73 and SUS1), the core or TAF (TBP-associated factor) module (TAF5, TAF6, TAF9, TAF10 and TAF12), and the Tra1 or SPT (Suppressor of Ty) module (TRA1, HFI1/ADA1, SPT3, SPT7, SPT8 and SPT20/ADA5). The Tra1/SPT module binds activators, the core module recruits TBP (TATA-binding protein), the HAT module contains the histone H3 acetyltransferase GCN5, and the DUB module comprises the histone H2B deubiquitinase UBP8. Also identified in an altered form of SAGA, named SALSA (SAGA altered, Spt8 absent) or SLIK (SAGA-like) complex, which contains a C-terminal truncated form of SPT7 and is missing SPT8. However, it has been shown that the SAGA and SAGA-like SALSA/SLIK transcriptional coactivators are structurally and biochemically equivalent. Component of an ADA/GCN5 complex that consists of HFI1/ADA1, ADA2, NGG1/ADA3, SPT20/ADA5 and GCN5 and probably is a subcomplex of SAGA.

It localises to the nucleus. In terms of biological role, component of the transcription coactivator SAGA complex. SAGA acts as a general cofactor required for essentially all RNA polymerase II transcription. At the promoters, SAGA is required for transcription pre-initiation complex (PIC) recruitment. It influences RNA polymerase II transcriptional activity through different activities such as TBP interaction (via core/TAF module) and promoter selectivity, interaction with transcription activators (via Tra1/SPT module), and chromatin modification through histone acetylation (via HAT module) and deubiquitination (via DUB module). SAGA preferentially acetylates histones H3 (to form H3K9ac, H3K14ac, H3K18ac and H3K23ac) and H2B and deubiquitinates histone H2B. SAGA interacts with DNA via upstream activating sequences (UASs). Also identified in a modified version of SAGA named SALSA or SLIK. The cleavage of SPT7 and the absence of the SPT8 subunit in SLIK neither drive any major conformational differences in its structure compared with SAGA, nor significantly affect HAT, DUB, or DNA-binding activities. This Saccharomyces cerevisiae (strain ATCC 204508 / S288c) (Baker's yeast) protein is SAGA complex subunit HFI1 (HFI1).